The following is a 470-amino-acid chain: MSTNEGSLWGGRFADGPADALAALSKSTHFDWVLAPYDIAASKAHARVLFSAGLLTEDQRDGLLAGLDSLASDVADGSFAPLVTDEDVHGALERGLIDRVGAELGGRLRAGRSRNDQVATLFRAWLRDAIRRVADGVLGVVSALATQAAAHPTAIMPGKTHLQSAQPVLLAHHLLAHAHPLLRDVDRLADFDKRAAVSPYGAGALAGSSLGLDPDAIAAELGFDSAADNSIDATAARDFAAEAAFVLAMIGVDLSRLAEDIILWSTTEFGYVTLHDAWSTGSSIMPQKKNPDIAELARGKSGRLIGNLTGLLATLKAQPLAYNRDLQEDKEPVFDSVAQLELLLPAVAGLVSTLSFDVDRMAELAPLGYTLATDVAEWLVRRGVPFRVAHEAAGAAVRAAEARGVGLEDLEDAELTGIHPELTGDVREVLTIEGSVNSRDARGGTAPVQVAKQLNVVRDTADRLRLRLRT.

It belongs to the lyase 1 family. Argininosuccinate lyase subfamily.

It localises to the cytoplasm. The enzyme catalyses 2-(N(omega)-L-arginino)succinate = fumarate + L-arginine. The protein operates within amino-acid biosynthesis; L-arginine biosynthesis; L-arginine from L-ornithine and carbamoyl phosphate: step 3/3. In Mycobacterium sp. (strain MCS), this protein is Argininosuccinate lyase.